Consider the following 195-residue polypeptide: Putative CheY-P phosphatase CheC1 (195 aa).

The protein belongs to the CheC family.

Catalyzes the dephosphorylation of CheY-P. The chain is Putative CheY-P phosphatase CheC1 (cheC1) from Halobacterium salinarum (strain ATCC 29341 / DSM 671 / R1).